We begin with the raw amino-acid sequence, 390 residues long: Elongation factor Tu 2 (390 aa).

The tr-type G domain occupies 10-201 (KPHVNVGTIG…LDEYVAVPPR (192 aa)). Positions 19–26 (GHVDHGKT) are G1. Position 19–26 (19–26 (GHVDHGKT)) interacts with GTP. Thr-26 serves as a coordination point for Mg(2+). Residues 55–59 (GITIA) are G2. Residues 76–79 (DCPG) are G3. GTP-binding positions include 76-80 (DCPGH) and 131-134 (NKAD). The G4 stretch occupies residues 131–134 (NKAD). Residues 168–170 (SAL) are G5.

Belongs to the TRAFAC class translation factor GTPase superfamily. Classic translation factor GTPase family. EF-Tu/EF-1A subfamily. As to quaternary structure, monomer.

It is found in the cytoplasm. The catalysed reaction is GTP + H2O = GDP + phosphate + H(+). Functionally, GTP hydrolase that promotes the GTP-dependent binding of aminoacyl-tRNA to the A-site of ribosomes during protein biosynthesis. This chain is Elongation factor Tu 2, found in Wolbachia pipientis wMel.